Consider the following 233-residue polypeptide: LexA repressor (233 aa).

Residues phenylalanine 26–threonine 46 constitute a DNA-binding region (H-T-H motif). Residues serine 154 and lysine 192 each act as for autocatalytic cleavage activity in the active site.

Belongs to the peptidase S24 family. As to quaternary structure, homodimer.

The catalysed reaction is Hydrolysis of Ala-|-Gly bond in repressor LexA.. Functionally, represses a number of genes involved in the response to DNA damage (SOS response), including recA and lexA. In the presence of single-stranded DNA, RecA interacts with LexA causing an autocatalytic cleavage which disrupts the DNA-binding part of LexA, leading to derepression of the SOS regulon and eventually DNA repair. The polypeptide is LexA repressor (Roseobacter denitrificans (strain ATCC 33942 / OCh 114) (Erythrobacter sp. (strain OCh 114))).